The primary structure comprises 318 residues: ATP phosphoribosyltransferase regulatory subunit (318 aa).

This sequence belongs to the class-II aminoacyl-tRNA synthetase family. HisZ subfamily. As to quaternary structure, heteromultimer composed of HisG and HisZ subunits.

It localises to the cytoplasm. It participates in amino-acid biosynthesis; L-histidine biosynthesis; L-histidine from 5-phospho-alpha-D-ribose 1-diphosphate: step 1/9. Functionally, required for the first step of histidine biosynthesis. May allow the feedback regulation of ATP phosphoribosyltransferase activity by histidine. The sequence is that of ATP phosphoribosyltransferase regulatory subunit from Lactococcus lactis subsp. cremoris (strain SK11).